A 148-amino-acid polypeptide reads, in one-letter code: MKVIFLKDVKGKGKKGEVKNVPDGYANNFLLKQGLAAEATNSSMKTLEAQKRKEEKDAAAELENAKELKETLEKLTVELKAKSGEGGRLFGSITSKQIVDAMQKSHKIKLDKRKFEMDDAIRALGYTNVTVKLHPQVTATVKVHVSEQ.

The protein belongs to the bacterial ribosomal protein bL9 family.

In terms of biological role, binds to the 23S rRNA. The protein is Large ribosomal subunit protein bL9 of Bacillus cereus (strain B4264).